Reading from the N-terminus, the 363-residue chain is Phosphoserine aminotransferase (363 aa).

An L-glutamate-binding site is contributed by R42. Residues W105, T155, D175, and Q198 each contribute to the pyridoxal 5'-phosphate site. N6-(pyridoxal phosphate)lysine is present on K199. Position 240–241 (240–241 (NT)) interacts with pyridoxal 5'-phosphate.

It belongs to the class-V pyridoxal-phosphate-dependent aminotransferase family. SerC subfamily. In terms of assembly, homodimer. It depends on pyridoxal 5'-phosphate as a cofactor.

It is found in the cytoplasm. It carries out the reaction O-phospho-L-serine + 2-oxoglutarate = 3-phosphooxypyruvate + L-glutamate. The catalysed reaction is 4-(phosphooxy)-L-threonine + 2-oxoglutarate = (R)-3-hydroxy-2-oxo-4-phosphooxybutanoate + L-glutamate. It participates in amino-acid biosynthesis; L-serine biosynthesis; L-serine from 3-phospho-D-glycerate: step 2/3. Its pathway is cofactor biosynthesis; pyridoxine 5'-phosphate biosynthesis; pyridoxine 5'-phosphate from D-erythrose 4-phosphate: step 3/5. Catalyzes the reversible conversion of 3-phosphohydroxypyruvate to phosphoserine and of 3-hydroxy-2-oxo-4-phosphonooxybutanoate to phosphohydroxythreonine. The chain is Phosphoserine aminotransferase from Herminiimonas arsenicoxydans.